A 400-amino-acid chain; its full sequence is Large envelope protein (400 aa).

The N-myristoyl glycine; by host moiety is linked to residue Gly2. Positions 2-119 (GGWLPKPRKG…PPLRDSHPQA (118 aa)) are pre-S1. The tract at residues 2 to 174 (GGWLPKPRKG…SSRTGDPAPT (173 aa)) is pre-S. The Virion surface; in external conformation segment spans residues 2–181 (GGWLPKPRKG…APTMENITSG (180 aa)). Over 2–253 (GGWLPKPRKG…PGYRWMCLRR (252 aa)) the chain is Intravirion; in internal conformation. The interval 84–115 (TLTTVPAVPPPASANRQSGRQPTPISPPLRDS) is disordered. Polar residues predominate over residues 97-106 (ANRQSGRQPT). The interval 120–174 (IKWNSPAFHQALQDPRVKGLYFPAGGSSSGTVSPVPNIASHISSISSRTGDPAPT) is pre-S2. A helical membrane pass occupies residues 182-202 (FLGPLLVLQAGFFLLTRILTI). The Intravirion; in external conformation segment spans residues 203–253 (PQSLDSWWTSLNFLGGSPVCLGQNSQSPTSNHSPTSCPPICPGYRWMCLRR). A helical membrane pass occupies residues 254-274 (FIIFLFILLLCLIFLLVLLDY). The Virion surface segment spans residues 275 to 348 (QGMLPVCPLI…WASVRFSWLS (74 aa)). Residue Asn320 is glycosylated (N-linked (GlcNAc...) asparagine; by host). Residues 349–369 (LLVPFVQWFVGLSPTVWLSVI) form a helical membrane-spanning segment. At 370–375 (WMMWYW) the chain is on the intravirion side. The helical transmembrane segment at 376 to 398 (GPRLYNILSPFIPLLPIFFCLWV) threads the bilayer. Topologically, residues 399–400 (YI) are virion surface.

It belongs to the orthohepadnavirus major surface antigen family. Li-HBsAg interacts with capsid protein and with HDV Large delta antigen. Isoform M associates with host chaperone CANX through its pre-S2 N glycan. This association may be essential for M proper secretion. In terms of processing, isoform M is N-terminally acetylated by host at a ratio of 90%, and N-glycosylated by host at the pre-S2 region. Myristoylated.

Its subcellular location is the virion membrane. Functionally, the large envelope protein exists in two topological conformations, one which is termed 'external' or Le-HBsAg and the other 'internal' or Li-HBsAg. In its external conformation the protein attaches the virus to cell receptors and thereby initiating infection. This interaction determines the species specificity and liver tropism. This attachment induces virion internalization predominantly through caveolin-mediated endocytosis. The large envelope protein also assures fusion between virion membrane and endosomal membrane. In its internal conformation the protein plays a role in virion morphogenesis and mediates the contact with the nucleocapsid like a matrix protein. The middle envelope protein plays an important role in the budding of the virion. It is involved in the induction of budding in a nucleocapsid independent way. In this process the majority of envelope proteins bud to form subviral lipoprotein particles of 22 nm of diameter that do not contain a nucleocapsid. The protein is Large envelope protein of Hepatitis B virus genotype A3 (isolate Cameroon/CMR983/1994) (HBV-A).